A 567-amino-acid chain; its full sequence is Proline--tRNA ligase (567 aa).

This sequence belongs to the class-II aminoacyl-tRNA synthetase family. ProS type 1 subfamily. Homodimer.

Its subcellular location is the cytoplasm. It carries out the reaction tRNA(Pro) + L-proline + ATP = L-prolyl-tRNA(Pro) + AMP + diphosphate. Catalyzes the attachment of proline to tRNA(Pro) in a two-step reaction: proline is first activated by ATP to form Pro-AMP and then transferred to the acceptor end of tRNA(Pro). As ProRS can inadvertently accommodate and process non-cognate amino acids such as alanine and cysteine, to avoid such errors it has two additional distinct editing activities against alanine. One activity is designated as 'pretransfer' editing and involves the tRNA(Pro)-independent hydrolysis of activated Ala-AMP. The other activity is designated 'posttransfer' editing and involves deacylation of mischarged Ala-tRNA(Pro). The misacylated Cys-tRNA(Pro) is not edited by ProRS. The chain is Proline--tRNA ligase from Staphylococcus epidermidis (strain ATCC 35984 / DSM 28319 / BCRC 17069 / CCUG 31568 / BM 3577 / RP62A).